The following is a 563-amino-acid chain: DNA repair protein rhp7 (563 aa).

The tract at residues 1–101 (MSSGSRVRGP…TDEEAEDNED (101 aa)) is disordered. The span at 39-59 (ESAGQSTGTESEVIQTPTSVE) shows a compositional bias: polar residues. Positions 78–90 (VKRRNLRNQKKKK) are enriched in basic residues.

Belongs to the RAD7 family.

The protein localises to the nucleus. Functionally, involved in global genome repair (GGR) via nucleotide excision repair (NER), in conjunction with rhp16, after UV irradiation. The sequence is that of DNA repair protein rhp7 (rhp7) from Schizosaccharomyces pombe (strain 972 / ATCC 24843) (Fission yeast).